The sequence spans 166 residues: Nucleotide-binding protein Dred_1927 (166 aa).

The protein belongs to the YajQ family.

Nucleotide-binding protein. The chain is Nucleotide-binding protein Dred_1927 from Desulforamulus reducens (strain ATCC BAA-1160 / DSM 100696 / MI-1) (Desulfotomaculum reducens).